Here is a 401-residue protein sequence, read N- to C-terminus: Imidazolonepropionase (401 aa).

The Fe(3+) site is built by H70 and H72. Residues H70 and H72 each coordinate Zn(2+). 3 residues coordinate 4-imidazolone-5-propanoate: R79, Y142, and H175. Y142 serves as a coordination point for N-formimidoyl-L-glutamate. H238 is a Fe(3+) binding site. H238 provides a ligand contact to Zn(2+). Q241 contributes to the 4-imidazolone-5-propanoate binding site. Residue D313 participates in Fe(3+) binding. A Zn(2+)-binding site is contributed by D313. N315 and G317 together coordinate N-formimidoyl-L-glutamate. Residue T318 coordinates 4-imidazolone-5-propanoate.

This sequence belongs to the metallo-dependent hydrolases superfamily. HutI family. Zn(2+) is required as a cofactor. Fe(3+) serves as cofactor.

It localises to the cytoplasm. It catalyses the reaction 4-imidazolone-5-propanoate + H2O = N-formimidoyl-L-glutamate. Its pathway is amino-acid degradation; L-histidine degradation into L-glutamate; N-formimidoyl-L-glutamate from L-histidine: step 3/3. Functionally, catalyzes the hydrolytic cleavage of the carbon-nitrogen bond in imidazolone-5-propanoate to yield N-formimidoyl-L-glutamate. It is the third step in the universal histidine degradation pathway. This Xanthomonas oryzae pv. oryzae (strain MAFF 311018) protein is Imidazolonepropionase.